The following is a 156-amino-acid chain: Small ribosomal subunit protein uS7 (156 aa).

This sequence belongs to the universal ribosomal protein uS7 family. In terms of assembly, part of the 30S ribosomal subunit. Contacts proteins S9 and S11.

In terms of biological role, one of the primary rRNA binding proteins, it binds directly to 16S rRNA where it nucleates assembly of the head domain of the 30S subunit. Is located at the subunit interface close to the decoding center, probably blocks exit of the E-site tRNA. The sequence is that of Small ribosomal subunit protein uS7 from Ruminiclostridium cellulolyticum (strain ATCC 35319 / DSM 5812 / JCM 6584 / H10) (Clostridium cellulolyticum).